Reading from the N-terminus, the 97-residue chain is Translation initiation factor 1A (97 aa).

An S1-like domain is found at 8-82 (IRVRLPDRKK…DRADIVWRYT (75 aa)).

This sequence belongs to the eIF-1A family.

Seems to be required for maximal rate of protein biosynthesis. Enhances ribosome dissociation into subunits and stabilizes the binding of the initiator Met-tRNA(I) to 40 S ribosomal subunits. The chain is Translation initiation factor 1A (eIF1A) from Archaeoglobus fulgidus (strain ATCC 49558 / DSM 4304 / JCM 9628 / NBRC 100126 / VC-16).